The following is a 400-amino-acid chain: Imidazolonepropionase (400 aa).

Fe(3+)-binding residues include His-68 and His-70. Residues His-68 and His-70 each coordinate Zn(2+). 4-imidazolone-5-propanoate-binding residues include Arg-77, Tyr-140, and His-173. Residue Tyr-140 participates in N-formimidoyl-L-glutamate binding. His-238 contacts Fe(3+). Residue His-238 coordinates Zn(2+). Gln-241 serves as a coordination point for 4-imidazolone-5-propanoate. Asp-313 is a binding site for Fe(3+). Asp-313 provides a ligand contact to Zn(2+). N-formimidoyl-L-glutamate is bound by residues Asn-315 and Gly-317. Residue Thr-318 participates in 4-imidazolone-5-propanoate binding.

It belongs to the metallo-dependent hydrolases superfamily. HutI family. Requires Zn(2+) as cofactor. Fe(3+) is required as a cofactor.

Its subcellular location is the cytoplasm. The catalysed reaction is 4-imidazolone-5-propanoate + H2O = N-formimidoyl-L-glutamate. Its pathway is amino-acid degradation; L-histidine degradation into L-glutamate; N-formimidoyl-L-glutamate from L-histidine: step 3/3. Catalyzes the hydrolytic cleavage of the carbon-nitrogen bond in imidazolone-5-propanoate to yield N-formimidoyl-L-glutamate. It is the third step in the universal histidine degradation pathway. The protein is Imidazolonepropionase of Paracoccus denitrificans (strain Pd 1222).